Consider the following 166-residue polypeptide: Crossover junction endodeoxyribonuclease RuvC (166 aa).

Active-site residues include D7, E70, and H143. Residues D7, E70, and H143 each coordinate Mg(2+).

It belongs to the RuvC family. In terms of assembly, homodimer which binds Holliday junction (HJ) DNA. The HJ becomes 2-fold symmetrical on binding to RuvC with unstacked arms; it has a different conformation from HJ DNA in complex with RuvA. In the full resolvosome a probable DNA-RuvA(4)-RuvB(12)-RuvC(2) complex forms which resolves the HJ. It depends on Mg(2+) as a cofactor.

The protein resides in the cytoplasm. The catalysed reaction is Endonucleolytic cleavage at a junction such as a reciprocal single-stranded crossover between two homologous DNA duplexes (Holliday junction).. The RuvA-RuvB-RuvC complex processes Holliday junction (HJ) DNA during genetic recombination and DNA repair. Endonuclease that resolves HJ intermediates. Cleaves cruciform DNA by making single-stranded nicks across the HJ at symmetrical positions within the homologous arms, yielding a 5'-phosphate and a 3'-hydroxyl group; requires a central core of homology in the junction. The consensus cleavage sequence is 5'-(A/T)TT(C/G)-3'. Cleavage occurs on the 3'-side of the TT dinucleotide at the point of strand exchange. HJ branch migration catalyzed by RuvA-RuvB allows RuvC to scan DNA until it finds its consensus sequence, where it cleaves and resolves the cruciform DNA. This is Crossover junction endodeoxyribonuclease RuvC from Thermus thermophilus (strain ATCC BAA-163 / DSM 7039 / HB27).